Consider the following 228-residue polypeptide: L-ribulose-5-phosphate 4-epimerase UlaF (228 aa).

Substrate is bound by residues 26 to 27 (GN), 43 to 44 (SG), and 72 to 73 (SS). Residues D74, H93, and H95 each contribute to the Zn(2+) site. D118 (proton donor/acceptor) is an active-site residue. Residue H167 participates in Zn(2+) binding. Y225 acts as the Proton donor/acceptor in catalysis.

Belongs to the aldolase class II family. AraD/FucA subfamily. Zn(2+) serves as cofactor.

The catalysed reaction is L-ribulose 5-phosphate = D-xylulose 5-phosphate. It functions in the pathway cofactor degradation; L-ascorbate degradation; D-xylulose 5-phosphate from L-ascorbate: step 4/4. Its function is as follows. Catalyzes the isomerization of L-ribulose 5-phosphate to D-xylulose 5-phosphate. Is involved in the anaerobic L-ascorbate utilization. The protein is L-ribulose-5-phosphate 4-epimerase UlaF of Escherichia coli O7:K1 (strain IAI39 / ExPEC).